The following is a 145-amino-acid chain: D-aminoacyl-tRNA deacylase (145 aa).

Residues 137-138 (GP) carry the Gly-cisPro motif, important for rejection of L-amino acids motif.

It belongs to the DTD family. Homodimer.

It localises to the cytoplasm. It catalyses the reaction glycyl-tRNA(Ala) + H2O = tRNA(Ala) + glycine + H(+). It carries out the reaction a D-aminoacyl-tRNA + H2O = a tRNA + a D-alpha-amino acid + H(+). In terms of biological role, an aminoacyl-tRNA editing enzyme that deacylates mischarged D-aminoacyl-tRNAs. Also deacylates mischarged glycyl-tRNA(Ala), protecting cells against glycine mischarging by AlaRS. Acts via tRNA-based rather than protein-based catalysis; rejects L-amino acids rather than detecting D-amino acids in the active site. By recycling D-aminoacyl-tRNA to D-amino acids and free tRNA molecules, this enzyme counteracts the toxicity associated with the formation of D-aminoacyl-tRNA entities in vivo and helps enforce protein L-homochirality. This Salmonella typhimurium (strain LT2 / SGSC1412 / ATCC 700720) protein is D-aminoacyl-tRNA deacylase.